Here is a 97-residue protein sequence, read N- to C-terminus: uncharacterized protein (97 aa).

This is an uncharacterized protein from Escherichia coli (Bacteriophage T4).